A 354-amino-acid polypeptide reads, in one-letter code: Aspartate carbamoyltransferase catalytic subunit (354 aa).

Carbamoyl phosphate is bound by residues arginine 67 and threonine 68. Lysine 95 contacts L-aspartate. Residues arginine 117, histidine 150, and glutamine 153 each coordinate carbamoyl phosphate. L-aspartate-binding residues include arginine 190 and arginine 261. Carbamoyl phosphate contacts are provided by glycine 302 and proline 303.

The protein belongs to the aspartate/ornithine carbamoyltransferase superfamily. ATCase family. As to quaternary structure, heterododecamer (2C3:3R2) of six catalytic PyrB chains organized as two trimers (C3), and six regulatory PyrI chains organized as three dimers (R2).

The enzyme catalyses carbamoyl phosphate + L-aspartate = N-carbamoyl-L-aspartate + phosphate + H(+). Its pathway is pyrimidine metabolism; UMP biosynthesis via de novo pathway; (S)-dihydroorotate from bicarbonate: step 2/3. Its function is as follows. Catalyzes the condensation of carbamoyl phosphate and aspartate to form carbamoyl aspartate and inorganic phosphate, the committed step in the de novo pyrimidine nucleotide biosynthesis pathway. In Synechococcus sp. (strain RCC307), this protein is Aspartate carbamoyltransferase catalytic subunit.